The following is a 60-amino-acid chain: Beta-defensin 11 (60 aa).

Positions 1-22 (MRLHHLLLALLFLVLSAGSGIS) are cleaved as a signal peptide. 3 disulfide bridges follow: C27–C56, C34–C49, and C39–C57.

This sequence belongs to the beta-defensin family. As to expression, neutrophilic granules.

The protein localises to the secreted. Its function is as follows. Has bactericidal activity. Active against E.coli ML35 and S.aureus 502A. The sequence is that of Beta-defensin 11 (DEFB11) from Bos taurus (Bovine).